The following is a 333-amino-acid chain: Phenylalanine--tRNA ligase alpha subunit (333 aa).

Residue Glu-248 participates in Mg(2+) binding.

It belongs to the class-II aminoacyl-tRNA synthetase family. Phe-tRNA synthetase alpha subunit type 1 subfamily. Tetramer of two alpha and two beta subunits. Requires Mg(2+) as cofactor.

It localises to the cytoplasm. The enzyme catalyses tRNA(Phe) + L-phenylalanine + ATP = L-phenylalanyl-tRNA(Phe) + AMP + diphosphate + H(+). The chain is Phenylalanine--tRNA ligase alpha subunit from Ureaplasma urealyticum serovar 10 (strain ATCC 33699 / Western).